Consider the following 229-residue polypeptide: Sec-independent protein translocase protein TatB (229 aa).

Residues 1-21 (MFDIGFSELLLFGVIALIVLG) traverse the membrane as a helical segment. The tract at residues 90–131 (EFEHSQSQNLKTSDKAASPANQANNDSAIQNNNEPATFSYAY) is disordered. The segment covering 108 to 131 (PANQANNDSAIQNNNEPATFSYAY) has biased composition (polar residues).

This sequence belongs to the TatB family. The Tat system comprises two distinct complexes: a TatABC complex, containing multiple copies of TatA, TatB and TatC subunits, and a separate TatA complex, containing only TatA subunits. Substrates initially bind to the TatABC complex, which probably triggers association of the separate TatA complex to form the active translocon.

It localises to the cell inner membrane. Its function is as follows. Part of the twin-arginine translocation (Tat) system that transports large folded proteins containing a characteristic twin-arginine motif in their signal peptide across membranes. Together with TatC, TatB is part of a receptor directly interacting with Tat signal peptides. TatB may form an oligomeric binding site that transiently accommodates folded Tat precursor proteins before their translocation. This chain is Sec-independent protein translocase protein TatB, found in Psychrobacter arcticus (strain DSM 17307 / VKM B-2377 / 273-4).